A 110-amino-acid polypeptide reads, in one-letter code: UPF0060 membrane protein Francci3_2786 (110 aa).

Transmembrane regions (helical) follow at residues Leu8–Val28, Gly33–Leu53, Ile62–Asp82, and Asp87–Ala107.

The protein belongs to the UPF0060 family.

The protein localises to the cell membrane. The chain is UPF0060 membrane protein Francci3_2786 from Frankia casuarinae (strain DSM 45818 / CECT 9043 / HFP020203 / CcI3).